The primary structure comprises 114 residues: Ribonuclease U2 (114 aa).

Cystine bridges form between C1-C54, C9-C113, and C55-C96. Residues D29, V30, A31, N32, D37, and Y39 each coordinate Ca(2+). Residue 39-49 (YPHQYYDEASE) coordinates substrate. The active site involves H41. The Proton acceptor role is filled by E62. R85 contributes to the substrate binding site. The active-site Proton donor is the H101. Substrate is bound at residue 108–110 (DGF).

It belongs to the ribonuclease U2 family.

The enzyme catalyses [RNA] containing adenosine + H2O = an [RNA fragment]-3'-adenosine-3'-phosphate + a 5'-hydroxy-ribonucleotide-3'-[RNA fragment].. The catalysed reaction is [RNA] containing guanosine + H2O = an [RNA fragment]-3'-guanosine-3'-phosphate + a 5'-hydroxy-ribonucleotide-3'-[RNA fragment].. In Ustilago sphaerogena (Smut fungus), this protein is Ribonuclease U2 (RNU2).